The sequence spans 320 residues: MIKKIGVLTSGGDAPGMNAAIRSVIRAALAKGIEVYGIHDGYLGLHRDRIEKLERRSVSDIINRGGTMLGSARFPAFKEESVRREAIANLNKHGIEALVVIGGDGSYMGAKKLTEMGYPCIGLPGTIDNDIAGTDFTIGFDTALNVVMEAIDRLRDTSTSHKRISVVEVMGRHCGDLAMAAAVAGGAEFVIVPEKGFKKEDLLANIDEGIASGKRHAIITICEHVTDVNALANLIELHTGLETRATILGHIQRGGSPTARDRILASRMGAYAVDLLIEGQGGRCIGLQRNELVHHDIIDCIENMKRPFNEELYNLTKILF.

G12 contributes to the ATP binding site. Position 22–26 (22–26 (RSVIR)) interacts with ADP. ATP is bound by residues 73–74 (RF) and 103–106 (GDGS). A Mg(2+)-binding site is contributed by D104. 126–128 (TID) contacts substrate. The active-site Proton acceptor is D128. An ADP-binding site is contributed by R155. Residues R163 and 170–172 (MGR) each bind substrate. Residues 186–188 (GAE) and 214–216 (KRH) contribute to the ADP site. Substrate is bound by residues E223, R244, and 250–253 (HIQR).

The protein belongs to the phosphofructokinase type A (PFKA) family. ATP-dependent PFK group I subfamily. Prokaryotic clade 'B1' sub-subfamily. As to quaternary structure, homotetramer. The cofactor is Mg(2+).

The protein resides in the cytoplasm. The enzyme catalyses beta-D-fructose 6-phosphate + ATP = beta-D-fructose 1,6-bisphosphate + ADP + H(+). It functions in the pathway carbohydrate degradation; glycolysis; D-glyceraldehyde 3-phosphate and glycerone phosphate from D-glucose: step 3/4. Its activity is regulated as follows. Allosterically activated by ADP and other diphosphonucleosides, and allosterically inhibited by phosphoenolpyruvate. Functionally, catalyzes the phosphorylation of D-fructose 6-phosphate to fructose 1,6-bisphosphate by ATP, the first committing step of glycolysis. This is ATP-dependent 6-phosphofructokinase from Tolumonas auensis (strain DSM 9187 / NBRC 110442 / TA 4).